The following is a 216-amino-acid chain: UPF0502 protein VPA1223 (216 aa).

The protein belongs to the UPF0502 family.

The polypeptide is UPF0502 protein VPA1223 (Vibrio parahaemolyticus serotype O3:K6 (strain RIMD 2210633)).